Consider the following 121-residue polypeptide: Small ribosomal subunit protein uS13 (121 aa).

The segment at 92–121 (RKGLPVRGQSSKTNARTVKGPRKTVANKKK) is disordered. Basic residues predominate over residues 110–121 (KGPRKTVANKKK).

This sequence belongs to the universal ribosomal protein uS13 family. Part of the 30S ribosomal subunit. Forms a loose heterodimer with protein S19. Forms two bridges to the 50S subunit in the 70S ribosome.

Its function is as follows. Located at the top of the head of the 30S subunit, it contacts several helices of the 16S rRNA. In the 70S ribosome it contacts the 23S rRNA (bridge B1a) and protein L5 of the 50S subunit (bridge B1b), connecting the 2 subunits; these bridges are implicated in subunit movement. Contacts the tRNAs in the A and P-sites. The polypeptide is Small ribosomal subunit protein uS13 (Mycoplasma mycoides subsp. mycoides SC (strain CCUG 32753 / NCTC 10114 / PG1)).